A 361-amino-acid polypeptide reads, in one-letter code: 3-dehydroquinate synthase (361 aa).

Residues Ser72–Lys77, Thr130–Thr131, Lys142, and Lys151 each bind NAD(+). Positions 184, 247, and 264 each coordinate Zn(2+).

The protein belongs to the sugar phosphate cyclases superfamily. Dehydroquinate synthase family. The cofactor is Co(2+). It depends on Zn(2+) as a cofactor. NAD(+) is required as a cofactor.

The protein localises to the cytoplasm. It catalyses the reaction 7-phospho-2-dehydro-3-deoxy-D-arabino-heptonate = 3-dehydroquinate + phosphate. It functions in the pathway metabolic intermediate biosynthesis; chorismate biosynthesis; chorismate from D-erythrose 4-phosphate and phosphoenolpyruvate: step 2/7. Catalyzes the conversion of 3-deoxy-D-arabino-heptulosonate 7-phosphate (DAHP) to dehydroquinate (DHQ). This Bacillus cereus (strain AH820) protein is 3-dehydroquinate synthase.